Consider the following 1178-residue polypeptide: DNA-directed RNA polymerase subunit beta' (1178 aa).

Residues C60, C62, C75, and C78 each coordinate Zn(2+). Residues D450, D452, and D454 each coordinate Mg(2+). C795, C869, C876, and C879 together coordinate Zn(2+).

It belongs to the RNA polymerase beta' chain family. The RNAP catalytic core consists of 2 alpha, 1 beta, 1 beta' and 1 omega subunit. When a sigma factor is associated with the core the holoenzyme is formed, which can initiate transcription. The cofactor is Mg(2+). It depends on Zn(2+) as a cofactor.

The catalysed reaction is RNA(n) + a ribonucleoside 5'-triphosphate = RNA(n+1) + diphosphate. Functionally, DNA-dependent RNA polymerase catalyzes the transcription of DNA into RNA using the four ribonucleoside triphosphates as substrates. In Clostridium beijerinckii (strain ATCC 51743 / NCIMB 8052) (Clostridium acetobutylicum), this protein is DNA-directed RNA polymerase subunit beta'.